A 180-amino-acid chain; its full sequence is Large ribosomal subunit protein uL5 (180 aa).

The protein belongs to the universal ribosomal protein uL5 family. Part of the 50S ribosomal subunit; part of the 5S rRNA/L5/L18/L25 subcomplex. Contacts the 5S rRNA and the P site tRNA. Forms a bridge to the 30S subunit in the 70S ribosome.

In terms of biological role, this is one of the proteins that bind and probably mediate the attachment of the 5S RNA into the large ribosomal subunit, where it forms part of the central protuberance. In the 70S ribosome it contacts protein S13 of the 30S subunit (bridge B1b), connecting the 2 subunits; this bridge is implicated in subunit movement. Contacts the P site tRNA; the 5S rRNA and some of its associated proteins might help stabilize positioning of ribosome-bound tRNAs. The sequence is that of Large ribosomal subunit protein uL5 from Streptococcus suis (strain 05ZYH33).